The chain runs to 564 residues: Phenylalanine--tRNA ligase beta subunit (564 aa).

The region spanning 286-362 (YFQNSLKINV…IGKGLDNFKS (77 aa)) is the B5 domain. Mg(2+) is bound by residues D340, D346, E349, and E350.

The protein belongs to the phenylalanyl-tRNA synthetase beta subunit family. Type 2 subfamily. Tetramer of two alpha and two beta subunits. Requires Mg(2+) as cofactor.

Its subcellular location is the cytoplasm. It catalyses the reaction tRNA(Phe) + L-phenylalanine + ATP = L-phenylalanyl-tRNA(Phe) + AMP + diphosphate + H(+). The sequence is that of Phenylalanine--tRNA ligase beta subunit from Borrelia recurrentis (strain A1).